We begin with the raw amino-acid sequence, 449 residues long: Gamma conglutin 1 (449 aa).

Positions Met-1 to Leu-33 are cleaved as a signal peptide. Residues His-60 to Asn-429 enclose the Peptidase A1 domain. 5 disulfides stabilise this stretch: Cys-88–Cys-178, Cys-102–Cys-115, Cys-107–Cys-133, Cys-118–Cys-128, and Cys-350–Cys-391. Asn-130 carries an N-linked (GlcNAc...) asparagine glycan.

This sequence belongs to the peptidase A1 family. In terms of assembly, two-subunit monomeric unit made of alpha and beta subunits coupled by disulfide bonds (at pH 4.5 and under non-reducing conditions). Can also form oligomers including dimer, tetramer and cyclic hexamer (trimer of dimers) (at pH &gt; 5.5). Component of globulins complexes which accumulate in seeds. Interacts with flavonoids (e.g. apigenin glucosides) present in globulins complexes. Forms a static complex with vitexin. In terms of processing, undergoes very complex post-translational maturation; the proteolytic processing leading to the formation of two alpha and beta subunits is incomplete, leaving a certain amount of the protein in an uncut form. Post-translationally, glycosylated on alpha chain. Expressed in developing cotyledons and in the embryonic axis of germinating seeds. Accumulates in seeds, especially in the protein bodies of developing cotyledonary cells (at protein level). Also detected, at low levels, in plumules and radicles.

It localises to the secreted. Its subcellular location is the extracellular space. Sulfur-rich seed storage protein that remains undegraded at germination. The chain is Gamma conglutin 1 from Lupinus angustifolius (Narrow-leaved blue lupine).